The chain runs to 273 residues: Formamidopyrimidine-DNA glycosylase (273 aa).

Pro2 functions as the Schiff-base intermediate with DNA in the catalytic mechanism. Glu3 serves as the catalytic Proton donor. The active-site Proton donor; for beta-elimination activity is the Lys60. Residues His94, Arg113, and Lys154 each coordinate DNA. The FPG-type zinc finger occupies 239–273 (EAYGRTGEPCRRCGTPIERIVVAQRSTHICPVCQA). Arg263 acts as the Proton donor; for delta-elimination activity in catalysis.

This sequence belongs to the FPG family. As to quaternary structure, monomer. The cofactor is Zn(2+).

It carries out the reaction Hydrolysis of DNA containing ring-opened 7-methylguanine residues, releasing 2,6-diamino-4-hydroxy-5-(N-methyl)formamidopyrimidine.. The enzyme catalyses 2'-deoxyribonucleotide-(2'-deoxyribose 5'-phosphate)-2'-deoxyribonucleotide-DNA = a 3'-end 2'-deoxyribonucleotide-(2,3-dehydro-2,3-deoxyribose 5'-phosphate)-DNA + a 5'-end 5'-phospho-2'-deoxyribonucleoside-DNA + H(+). In terms of biological role, involved in base excision repair of DNA damaged by oxidation or by mutagenic agents. Acts as a DNA glycosylase that recognizes and removes damaged bases. Has a preference for oxidized purines, such as 7,8-dihydro-8-oxoguanine (8-oxoG). Has AP (apurinic/apyrimidinic) lyase activity and introduces nicks in the DNA strand. Cleaves the DNA backbone by beta-delta elimination to generate a single-strand break at the site of the removed base with both 3'- and 5'-phosphates. This Herpetosiphon aurantiacus (strain ATCC 23779 / DSM 785 / 114-95) protein is Formamidopyrimidine-DNA glycosylase.